A 436-amino-acid polypeptide reads, in one-letter code: UPF0229 protein Meso_0256 (436 aa).

Residues 53–110 form a disordered region; sequence PMPARGTSEPTFRPDRSSGERGYILPGNKEFAPGDRLPKPGASGGEGGTGAGRGGSDD. The span at 94-106 shows a compositional bias: gly residues; the sequence is ASGGEGGTGAGRG.

Belongs to the UPF0229 family.

In Chelativorans sp. (strain BNC1), this protein is UPF0229 protein Meso_0256.